The chain runs to 573 residues: MQNIKSFMQFPASKKVYVEGSRPDIRVPMREITLSPTKTETGIIENEPVRVYDTSGPYTDPDFQPDIQKGLPPLRKRWILERGDVEEYEGRPVKPEDNGFRNGKQSEITLPFERKPLRAKKGKTVTQMHYAKRGIITPEMEFVAIRENIDPEIVRQEVAAGRAIIPSNINHPESEPMIIGSRFHVKINANIGNSAVTSSIEEEVEKMLWAVRWGADTIMDLSTGKHIHATREYIIRNSPVPVGTVPIYQALEKVNGVVEDLTWEIYRDTLIEQAEQGVDYFTIHAGVLLRYIPMTVNRTTGIVSRGGSIMAQWCLAHHEENFLYTHFEEICEILKTYDIAVSLGDGLRPGSIADANDEAQFAELETLGELTEIAWKHDVQVMIEGPGHVPMHKIKENVDKQIEICKGAPFYTLGPLTTDIAPGYDHITSAIGAAIIGAYGTAMLCYVTPKEHLGLPNKDDVREGVIAYKIAAHAADLAKGHPGAQRRDDALSKARFEFRWNDQFNLSLDPDRAREYHDETLPAEGAKVAHFCSMCGPKFCSMKISHELQKTVREEGMKQKAKEFVENGSSLYR.

Residues N190, M219, Y248, H284, 304 to 306 (SRG), 345 to 348 (DGLR), and E384 each bind substrate. H388 contacts Zn(2+). Position 411 (Y411) interacts with substrate. H452 serves as a coordination point for Zn(2+). The [4Fe-4S] cluster site is built by C532, C535, and C540.

The protein belongs to the ThiC family. Requires [4Fe-4S] cluster as cofactor.

The enzyme catalyses 5-amino-1-(5-phospho-beta-D-ribosyl)imidazole + S-adenosyl-L-methionine = 4-amino-2-methyl-5-(phosphooxymethyl)pyrimidine + CO + 5'-deoxyadenosine + formate + L-methionine + 3 H(+). Its pathway is cofactor biosynthesis; thiamine diphosphate biosynthesis. Catalyzes the synthesis of the hydroxymethylpyrimidine phosphate (HMP-P) moiety of thiamine from aminoimidazole ribotide (AIR) in a radical S-adenosyl-L-methionine (SAM)-dependent reaction. In Geobacillus sp. (strain WCH70), this protein is Phosphomethylpyrimidine synthase.